The following is a 303-amino-acid chain: UDP-3-O-acyl-N-acetylglucosamine deacetylase (303 aa).

Positions 78, 237, and 241 each coordinate Zn(2+). Histidine 264 functions as the Proton donor in the catalytic mechanism.

The protein belongs to the LpxC family. Zn(2+) serves as cofactor.

The catalysed reaction is a UDP-3-O-[(3R)-3-hydroxyacyl]-N-acetyl-alpha-D-glucosamine + H2O = a UDP-3-O-[(3R)-3-hydroxyacyl]-alpha-D-glucosamine + acetate. It participates in glycolipid biosynthesis; lipid IV(A) biosynthesis; lipid IV(A) from (3R)-3-hydroxytetradecanoyl-[acyl-carrier-protein] and UDP-N-acetyl-alpha-D-glucosamine: step 2/6. Functionally, catalyzes the hydrolysis of UDP-3-O-myristoyl-N-acetylglucosamine to form UDP-3-O-myristoylglucosamine and acetate, the committed step in lipid A biosynthesis. The sequence is that of UDP-3-O-acyl-N-acetylglucosamine deacetylase from Pseudomonas entomophila (strain L48).